The following is a 225-amino-acid chain: NAD(P)H-quinone oxidoreductase subunit K, chloroplastic (225 aa).

[4Fe-4S] cluster is bound by residues C43, C44, C108, and C139.

This sequence belongs to the complex I 20 kDa subunit family. NDH is composed of at least 16 different subunits, 5 of which are encoded in the nucleus. Requires [4Fe-4S] cluster as cofactor.

The protein localises to the plastid. Its subcellular location is the chloroplast thylakoid membrane. It catalyses the reaction a plastoquinone + NADH + (n+1) H(+)(in) = a plastoquinol + NAD(+) + n H(+)(out). The catalysed reaction is a plastoquinone + NADPH + (n+1) H(+)(in) = a plastoquinol + NADP(+) + n H(+)(out). Its function is as follows. NDH shuttles electrons from NAD(P)H:plastoquinone, via FMN and iron-sulfur (Fe-S) centers, to quinones in the photosynthetic chain and possibly in a chloroplast respiratory chain. The immediate electron acceptor for the enzyme in this species is believed to be plastoquinone. Couples the redox reaction to proton translocation, and thus conserves the redox energy in a proton gradient. The chain is NAD(P)H-quinone oxidoreductase subunit K, chloroplastic from Lemna minor (Common duckweed).